A 161-amino-acid chain; its full sequence is Phosphopantetheine adenylyltransferase (161 aa).

Thr10 serves as a coordination point for substrate. ATP is bound by residues 10-11 (TF) and His18. Residues Lys42, Met74, and Arg88 each coordinate substrate. Residues 89–91 (GLR), Glu99, and 124–130 (WSFISSS) each bind ATP.

This sequence belongs to the bacterial CoaD family. In terms of assembly, homohexamer. The cofactor is Mg(2+).

The protein localises to the cytoplasm. It carries out the reaction (R)-4'-phosphopantetheine + ATP + H(+) = 3'-dephospho-CoA + diphosphate. The protein operates within cofactor biosynthesis; coenzyme A biosynthesis; CoA from (R)-pantothenate: step 4/5. In terms of biological role, reversibly transfers an adenylyl group from ATP to 4'-phosphopantetheine, yielding dephospho-CoA (dPCoA) and pyrophosphate. The chain is Phosphopantetheine adenylyltransferase from Edwardsiella ictaluri (strain 93-146).